Here is a 624-residue protein sequence, read N- to C-terminus: Chaperone protein HtpG (624 aa).

Residues 1–336 are a; substrate-binding; the sequence is MKGQETRGFQ…SNDLPLNVSR (336 aa). Residues 337 to 552 are b; it reads EILQDSSITR…NDEMSTQMAK (216 aa). The c stretch occupies residues 553–624; the sequence is LFAAAGQAVP…IRRMNQLLVS (72 aa).

Belongs to the heat shock protein 90 family. As to quaternary structure, homodimer.

The protein localises to the cytoplasm. Functionally, molecular chaperone. Has ATPase activity. This chain is Chaperone protein HtpG, found in Cronobacter sakazakii (strain ATCC BAA-894) (Enterobacter sakazakii).